Here is an 82-residue protein sequence, read N- to C-terminus: Acyl carrier protein (82 aa).

Residues 4-79 (EKIFQELKNI…DVVDIIESNL (76 aa)) enclose the Carrier domain. Ser-39 is modified (O-(pantetheine 4'-phosphoryl)serine).

Belongs to the acyl carrier protein (ACP) family. Post-translationally, 4'-phosphopantetheine is transferred from CoA to a specific serine of apo-ACP by AcpS. This modification is essential for activity because fatty acids are bound in thioester linkage to the sulfhydryl of the prosthetic group.

It localises to the cytoplasm. It functions in the pathway lipid metabolism; fatty acid biosynthesis. Its function is as follows. Carrier of the growing fatty acid chain in fatty acid biosynthesis. The protein is Acyl carrier protein of Coprothermobacter proteolyticus (strain ATCC 35245 / DSM 5265 / OCM 4 / BT).